Here is a 207-residue protein sequence, read N- to C-terminus: Large ribosomal subunit protein uL3c (207 aa).

Positions 128 to 148 are disordered; sequence FTRGPMTHGSKNHRAPGSIGM.

It belongs to the universal ribosomal protein uL3 family. As to quaternary structure, part of the 50S ribosomal subunit.

It localises to the plastid. Its subcellular location is the chloroplast. In terms of biological role, one of the primary rRNA binding proteins, it binds directly near the 3'-end of the 23S rRNA, where it nucleates assembly of the 50S subunit. This chain is Large ribosomal subunit protein uL3c (rpl3), found in Trieres chinensis (Marine centric diatom).